Here is a 309-residue protein sequence, read N- to C-terminus: Short chain dehydrogenase MYCFIDRAFT_6125 (309 aa).

NADP(+) contacts are provided by isoleucine 43, arginine 67, aspartate 88, and arginine 150. The active-site Proton donor is the serine 168. NADP(+)-binding residues include tyrosine 182, lysine 186, valine 215, and serine 217. Residue tyrosine 182 is the Proton acceptor of the active site. Residue lysine 186 is the Lowers pKa of active site Tyr of the active site.

Belongs to the short-chain dehydrogenases/reductases (SDR) family.

It participates in secondary metabolite biosynthesis. In terms of biological role, short chain dehydrogenase; part of the gene cluster that mediates the biosynthesis of an emodin derivative that may be involved in black Sigatoka disease of banana. The pathway begins with the synthesis of atrochrysone thioester by the polyketide synthase PKS8-1. The atrochrysone carboxyl ACP thioesterase MYCFIDRAFT_190111 then breaks the thioester bond and releases the atrochrysone carboxylic acid from PKS8-1. The decarboxylase MYCFIDRAFT_34057 then catalyzes the concerted decarboxylation-elimination required to convert atochrysone carboxylic acid into emodin anthrone, which is further oxidized to emodin by the anthrone oxygenase MYCFIDRAFT_34418. The functions of the other tailoring enzymes as well as the final product of the cluster have still to be identified. The protein is Short chain dehydrogenase MYCFIDRAFT_6125 of Pseudocercospora fijiensis (strain CIRAD86) (Black leaf streak disease fungus).